We begin with the raw amino-acid sequence, 205 residues long: Small ribosomal subunit protein uS4 (205 aa).

Residues 1–49 (MSKRQSAKYKLDRRMGENIWGRPKSPVNRREYGPGQHGQRRKGKLSDFG) are disordered. In terms of domain architecture, S4 RNA-binding spans 94 to 157 (SRLDAIVFRA…KQLTVVLESV (64 aa)).

This sequence belongs to the universal ribosomal protein uS4 family. Part of the 30S ribosomal subunit. Contacts protein S5. The interaction surface between S4 and S5 is involved in control of translational fidelity.

Its function is as follows. One of the primary rRNA binding proteins, it binds directly to 16S rRNA where it nucleates assembly of the body of the 30S subunit. Functionally, with S5 and S12 plays an important role in translational accuracy. The chain is Small ribosomal subunit protein uS4 from Chelativorans sp. (strain BNC1).